We begin with the raw amino-acid sequence, 387 residues long: Succinate--CoA ligase [ADP-forming] subunit beta (387 aa).

Residues lysine 46, 53 to 55 (GRG), glutamate 99, alanine 102, and glutamate 107 each bind ATP. The Mg(2+) site is built by asparagine 199 and aspartate 213. Residues asparagine 264 and 321 to 323 (GIV) contribute to the substrate site.

This sequence belongs to the succinate/malate CoA ligase beta subunit family. Heterotetramer of two alpha and two beta subunits. Requires Mg(2+) as cofactor.

It catalyses the reaction succinate + ATP + CoA = succinyl-CoA + ADP + phosphate. It carries out the reaction GTP + succinate + CoA = succinyl-CoA + GDP + phosphate. The protein operates within carbohydrate metabolism; tricarboxylic acid cycle; succinate from succinyl-CoA (ligase route): step 1/1. Its function is as follows. Succinyl-CoA synthetase functions in the citric acid cycle (TCA), coupling the hydrolysis of succinyl-CoA to the synthesis of either ATP or GTP and thus represents the only step of substrate-level phosphorylation in the TCA. The beta subunit provides nucleotide specificity of the enzyme and binds the substrate succinate, while the binding sites for coenzyme A and phosphate are found in the alpha subunit. This is Succinate--CoA ligase [ADP-forming] subunit beta from Campylobacter jejuni (strain RM1221).